A 918-amino-acid chain; its full sequence is Rap guanine nucleotide exchange factor 3 (918 aa).

Residue Ser79 is modified to Phosphoserine. In terms of domain architecture, DEP spans 110 to 186 (ATYPTLIRDR…RDAQFYRFPG (77 aa)). Residues 218–242 (TVALRKPPGQRTDEELDLIFEELLH) are interaction with PDE3B. Residues 311–314 (GQLA) and 321–322 (RA) each bind 3',5'-cyclic AMP. Positions 369–388 (TSQGAGPSRPPTPGRNRYTV) are disordered. An N-terminal Ras-GEF domain is found at 384-521 (NRYTVMSGTP…EQYPERRRHH (138 aa)). The tract at residues 398 to 422 (ELLLEAMRPDSSAHDPTETFLSDFL) is interaction with PDE3B. A phosphoserine mark is found at Ser531 and Ser859. The Ras-GEF domain maps to 665–884 (SAKDLAGQLT…SRISTCSEQS (220 aa)).

In terms of assembly, interacts with PDE3B and PIK3R6; form a signaling complex that regulates phosphatidylinositol 3-kinase gamma in angiogenesis.

The protein localises to the cytoplasm. It is found in the membrane. Functionally, guanine nucleotide exchange factor (GEF) for RAP1A and RAP2A small GTPases that is activated by binding cAMP. Through simultaneous binding of PDE3B to RAPGEF3 and PIK3R6 is assembled in a signaling complex in which it activates the PI3K gamma complex and which is involved in angiogenesis. Plays a role in the modulation of the cAMP-induced dynamic control of endothelial barrier function through a pathway that is independent on Rho-mediated signaling. Required for the actin rearrangement at cell-cell junctions, such as stress fibers and junctional actin. This Mus musculus (Mouse) protein is Rap guanine nucleotide exchange factor 3 (Rapgef3).